The following is a 101-amino-acid chain: Urinary protein 2 (101 aa).

Positions 1-21 are cleaved as a signal peptide; the sequence is MGKHILLLPLGLSLLMSSLLA. A UPAR/Ly6 domain is found at 22–99; that stretch reads LQCFRCTSFD…CSATPFCNMV (78 aa). 5 disulfides stabilise this stretch: cysteine 24–cysteine 51, cysteine 27–cysteine 36, cysteine 43–cysteine 70, cysteine 73–cysteine 89, and cysteine 90–cysteine 96. Residues asparagine 67 and asparagine 74 are each glycosylated (N-linked (GlcNAc...) asparagine).

In terms of processing, N-glycosylated.

The protein resides in the secreted. This Rattus norvegicus (Rat) protein is Urinary protein 2.